The sequence spans 152 residues: Toxin Res (152 aa).

The protein belongs to the MbcT/ParT/Res family. As to quaternary structure, homodimer. Forms a complex with cognate antitoxin Xre.

In terms of biological role, toxic component of a type II toxin-antitoxin (TA) system. Expression in E.coli inhibits cell growth; bacteriostasis is neutralized by expression of cognate antitoxin Xre. Probably depletes intracellular NAD(+). This chain is Toxin Res, found in Yersinia enterocolitica serotype O:8 / biotype 1B (strain NCTC 13174 / 8081).